A 171-amino-acid chain; its full sequence is Histone H1, gonadal (171 aa).

Disordered stretches follow at residues 1 to 40 (AASP…AHPP) and 133 to 171 (AKAK…KAKP). Positions 9–35 (ASPRKSPKKSPRKSPKKKSPRKRKARS) are enriched in basic residues. Residues 37–111 (AHPPVIDMIT…GATGRFRVGA (75 aa)) enclose the H15 domain.

This sequence belongs to the histone H1/H5 family. As to expression, sperm.

It localises to the nucleus. Its subcellular location is the chromosome. In terms of biological role, histones H1 are necessary for the condensation of nucleosome chains into higher-order structures. This Echinolampas crassa (Sea urchin) protein is Histone H1, gonadal.